The sequence spans 155 residues: Small ribosomal subunit protein uS7 (155 aa).

It belongs to the universal ribosomal protein uS7 family. As to quaternary structure, part of the 30S ribosomal subunit. Contacts proteins S9 and S11.

Functionally, one of the primary rRNA binding proteins, it binds directly to 16S rRNA where it nucleates assembly of the head domain of the 30S subunit. Is located at the subunit interface close to the decoding center, probably blocks exit of the E-site tRNA. The protein is Small ribosomal subunit protein uS7 of Thermotoga petrophila (strain ATCC BAA-488 / DSM 13995 / JCM 10881 / RKU-1).